Consider the following 253-residue polypeptide: DNA repair protein RecO (253 aa).

The protein belongs to the RecO family.

In terms of biological role, involved in DNA repair and RecF pathway recombination. In Staphylococcus epidermidis (strain ATCC 35984 / DSM 28319 / BCRC 17069 / CCUG 31568 / BM 3577 / RP62A), this protein is DNA repair protein RecO.